We begin with the raw amino-acid sequence, 3419 residues long: Genome polyprotein (3419 aa).

The segment at 1-25 (MKNPKEEIRRIRIVNMLKRGVARVN) is disordered. Topologically, residues 1-104 (MKNPKEEIRR…INARKERKRR (104 aa)) are cytoplasmic. The interval 37–72 (LLLGHGPIRMVLAILAFLRFTAIKPSLGLINRWGSV) is hydrophobic; homodimerization of capsid protein C. The propeptide at 105-122 (GADTSIGIIGLLLTTAMA) is ER anchor for capsid protein C, removed in mature form by serine protease NS3. The chain crosses the membrane as a helical span at residues 105 to 125 (GADTSIGIIGLLLTTAMAAEI). Over 126–249 (TRRGSAYYMY…YTKHLIKVEN (124 aa)) the chain is Extracellular. A glycan (N-linked (GlcNAc...) asparagine; by host) is linked at asparagine 192. Residues 250 to 269 (WIFRNPGFALVAVAIAWLLG) form a helical membrane-spanning segment. Over 270 to 274 (SSTSQ) the chain is Cytoplasmic. Residues 275 to 290 (KVIYLVMILLIAPAYS) form a helical membrane-spanning segment. Topologically, residues 291–741 (IRCIGVSNRD…HQIFGAAFKS (451 aa)) are extracellular. A disulfide bridge links cysteine 293 with cysteine 320. Residue lysine 328 forms a Glycyl lysine isopeptide (Lys-Gly) (interchain with G-Cter in ubiquitin) linkage. Disulfide bonds link cysteine 350-cysteine 406, cysteine 350-cysteine 411, cysteine 364-cysteine 395, cysteine 382-cysteine 406, cysteine 382-cysteine 411, cysteine 476-cysteine 577, and cysteine 594-cysteine 625. Residues 388 to 401 (DRGWGNGCGLFGKG) are fusion peptide. A Glycyl lysine isopeptide (Lys-Gly) (interchain with G-Cter in ubiquitin) cross-link involves residue lysine 567. Residues 742-763 (LFGGMSWFSQILIGTLLVWLGL) form a helical membrane-spanning segment. The Cytoplasmic portion of the chain corresponds to 764–769 (NTKNGS). A helical membrane pass occupies residues 770 to 790 (ISLTCLALGGVMIFLSTAVSA). Residues 791–1173 (DVGCSVDFSK…EGLKKRMTTK (383 aa)) lie on the Lumenal side of the membrane. 6 cysteine pairs are disulfide-bonded: cysteine 794-cysteine 805, cysteine 845-cysteine 933, cysteine 969-cysteine 1013, cysteine 1070-cysteine 1119, cysteine 1081-cysteine 1102, and cysteine 1103-cysteine 1106. N-linked (GlcNAc...) asparagine; by host glycans are attached at residues asparagine 920 and asparagine 997. A helical membrane pass occupies residues 1174–1194 (IIMSTSMAVLVVMILGGFSMS). Over 1195 to 1216 (DLAKLVILMGATFAEMNTGGDV) the chain is Cytoplasmic. Residues 1217-1237 (AHLALVAAFKVRPALLVSFIF) form a helical membrane-spanning segment. Residues 1238-1266 (RANWTPRESMLLALASCLLQTAISALEGD) are Lumenal-facing. A helical transmembrane segment spans residues 1267 to 1287 (LMVLINGFALAWLAIRAMAVP). Topologically, residues 1288–1291 (RTDN) are cytoplasmic. The chain crosses the membrane as a helical span at residues 1292–1312 (IALPILAALTPLARGTLLVAW). Residues 1313–1341 (RAGLATCGGIMLLSLKGKGSVKKNLPFVM) are Lumenal-facing. Residues 1342 to 1362 (ALGLTAVRVVDPINVVGLLLL) form a helical membrane-spanning segment. The Cytoplasmic portion of the chain corresponds to 1363–1369 (TRSGKRS). A helical membrane pass occupies residues 1370–1390 (WPPSEVLTAVGLICALAGGFA). Topologically, residues 1391 to 1393 (KAD) are lumenal. Residues 1394-1414 (IEMAGPMAAVGLLIVSYVVSG) traverse the membrane as a helical segment. Topologically, residues 1415-1468 (KSVDMYIERAGDITWEKDAEVTGNSPRLDVALDESGDFSLVEEDGPPMREIILK) are cytoplasmic. The segment at 1421 to 1460 (IERAGDITWEKDAEVTGNSPRLDVALDESGDFSLVEEDGP) is interacts with and activates NS3 protease. The tract at residues 1425 to 1447 (GDITWEKDAEVTGNSPRLDVALD) is disordered. The segment at residues 1469–1489 (VVLMAICGMNPIAIPFAAGAW) is an intramembrane region (helical). Residues 1490 to 2166 (YVYVKTGKRS…KAAAAQLPET (677 aa)) are Lumenal-facing. Residues 1499 to 1676 (SGALWDVPAP…KREEETPVEC (178 aa)) enclose the Peptidase S7 domain. Residues histidine 1549, aspartate 1573, and serine 1633 each act as charge relay system; for serine protease NS3 activity in the active site. The Helicase ATP-binding domain maps to 1679 to 1835 (PSMLKKKQLT…DSNSPIMDTE (157 aa)). The important for RNA-binding stretch occupies residues 1683-1686 (KKKQ). 1692–1699 (LHPGAGKT) contributes to the ATP binding site. Residues 1783–1786 (DEAH) carry the DEAH box motif. Residues 1830-2009 (PIMDTEVEVP…GLIASLYRPE (180 aa)) form the Helicase C-terminal domain. Lysine 1887 is modified (N6-acetyllysine; by host). Residues 2167–2187 (LETIMLLGLLGTVSLGIFFVL) form a helical membrane-spanning segment. Residues 2188–2191 (MRNK) lie on the Lumenal side of the membrane. The segment at residues 2192 to 2212 (GIGKMGFGMVTLGASAWLMWL) is an intramembrane region (helical). Topologically, residues 2213–2214 (SE) are cytoplasmic. A helical transmembrane segment spans residues 2215 to 2235 (IEPARIACVLIVVFLLLVVLI). Residues 2236–2250 (PEPEKQRSPQDNQMA) are Lumenal-facing. An intramembrane region (helical) is located at residues 2251–2265 (IIIMVAVGLLGLITA). Over 2266 to 2303 (NELGWLERTKNDIAHLMGRREEGATMGFSMDIDLRPAS) the chain is Lumenal. Positions 2304-2324 (AWAIYAALTTLITPAVQHAVT) form an intramembrane region, helical. At 2325-2340 (TSYNNYSLMAMATQAG) the chain is on the lumenal side. Residues 2341–2361 (VLFGMGKGMPFMHGDLGVPLL) form a helical membrane-spanning segment. Over 2362–2371 (MMGCYSQLTP) the chain is Cytoplasmic. The helical transmembrane segment at 2372-2392 (LTLIVAIILLVAHYMYLIPGL) threads the bilayer. The Lumenal portion of the chain corresponds to 2393–2437 (QAAAARAAQKRTAAGIMKNPVVDGIVVTDIDTMTIDPQVEKKMGQ). Residues 2438 to 2458 (VLLIAVAISSAVLLRTAWGWG) form a helical membrane-spanning segment. Residues 2459 to 3419 (EAGALITAAT…GEEGSTPGVL (961 aa)) are Cytoplasmic-facing. Positions 2517–2781 (GGGTGETLGE…DVNLGSGTRA (265 aa)) constitute an mRNA cap 0-1 NS5-type MT domain. MRNA is bound by residues lysine 2529, leucine 2532, asparagine 2533, methionine 2535, phenylalanine 2540, and lysine 2544. 2529 to 2535 (KARLNQM) contributes to the GTP binding site. S-adenosyl-L-methionine is bound at residue serine 2572. Serine 2572 is subject to Phosphoserine. Residue lysine 2577 is the For 2'-O-MTase activity of the active site. The segment at 2593–2596 (VVDL) is SUMO-interacting motif (SIM). Residues glycine 2602, tryptophan 2603, threonine 2620, lysine 2621, histidine 2626, glutamate 2627, aspartate 2647, valine 2648, aspartate 2662, and isoleucine 2663 each contribute to the S-adenosyl-L-methionine site. The active-site For 2'-O-MTase activity is aspartate 2662. GTP is bound at residue 2665–2671 (ESSSSPE). Residue serine 2666 participates in mRNA binding. The For 2'-O-MTase activity role is filled by lysine 2698. MRNA is bound by residues arginine 2729 and serine 2731. 2729 to 2731 (RNS) serves as a coordination point for GTP. Catalysis depends on glutamate 2734, which acts as the For 2'-O-MTase activity. Tyrosine 2736 contacts S-adenosyl-L-methionine. The Nuclear localization signal (NLS) motif lies at 2904–2910 (KRKRPRV). Zn(2+)-binding residues include glutamate 2955, histidine 2959, cysteine 2964, and cysteine 2967. The RdRp catalytic domain maps to 3045 to 3195 (GKMYADDTAG…KPIDDRFAHA (151 aa)). Residues histidine 3230, cysteine 3246, and cysteine 3365 each contribute to the Zn(2+) site.

This sequence in the N-terminal section; belongs to the class I-like SAM-binding methyltransferase superfamily. mRNA cap 0-1 NS5-type methyltransferase family. In terms of assembly, homodimer. Interacts with host SERTAD3; this interaction promotes capsid protein C degradation. Interacts with host CAPRIN1; this interaction is probably linked to the inhibition of stress granules formation by the virus. Interacts with host G3BP1; this interaction is probably linked to the inhibition of stress granules formation by the virus. Forms heterodimers with envelope protein E in the endoplasmic reticulum and Golgi. Interacts with non-structural protein 2A. As to quaternary structure, homodimer; in the endoplasmic reticulum and Golgi. Interacts with host TYRO3, AXL and DC-SIGN proteins. Interacts with non-structural protein 2A. Interacts with host HAVCR1; this interaction likely mediates virus attachment to host cell. Interacts with host NCAM1. Interacts with host HSPA5. Interacts with Aedes aegypti SRPN25, APY and venom allergen-1 salivary proteins; the interactions do not affect Zika virus replication in human endothelial cells and keratinocytes. In terms of assembly, homodimer; Homohexamer when secreted. Interacts with host TBK1. Interacts with host USP8. Interacts with envelope protein E. Interacts with host HSPA5. Interacts with the structural protein prM/E complex, and the NS2B/NS3 protease complex. As to quaternary structure, forms a heterodimer with serine protease NS3. May form homooligomers. Interacts with human SPCS1. Interacts with non-structural protein 2A. In terms of assembly, forms a heterodimer with NS2B. Interacts with NS4B. Interacts with unphosphorylated RNA-directed RNA polymerase NS5; this interaction stimulates RNA-directed RNA polymerase NS5 guanylyltransferase activity. Interacts with non-structural protein 2A. Interacts with host SHFL; this interaction promotes NS3 degradation via a lysosome-dependent pathway. Interacts with host CEP63; this interaction disorganizes the centrosome and inhibits host innate immune response. May interact with host ANKLE2; the interaction may cause defects in brain development, such as microcephaly. May interact with host SRPRA and SEC61G. As to quaternary structure, interacts with serine protease NS3. Interacts with NS1. Interacts with host TBK1. In terms of assembly, homodimer. Interacts with host STAT2; this interaction inhibits the phosphorylation of the latter, and, when all viral proteins are present (polyprotein), targets STAT2 for degradation. Interacts with host TBK1 and IKBKE; these interactions lead to the inhibition of the host RIG-I signaling pathway. Interacts with host KPNA2. Interacts with host PAF1 complex; the interaction may prevent the recruitment of the host PAF1 complex to interferon-responsive genes, and thus reduces the immune response. Interacts with serine protease NS3. Interacts with host ZSWIM8; this interaction allows STAT2 binding to ZSWIM8 and subsequent proteasomal degradation leading to inhibition of interferon signaling. Specific enzymatic cleavages in vivo yield mature proteins. Cleavages in the lumen of endoplasmic reticulum are performed by host signal peptidase, whereas cleavages in the cytoplasmic side are performed by serine protease NS3. Signal cleavage at the 2K-4B site requires a prior NS3 protease-mediated cleavage at the 4A-2K site. In terms of processing, cleaved in post-Golgi vesicles by a host furin, releasing the mature small envelope protein M, and peptide pr. This cleavage is incomplete as up to 30% of viral particles still carry uncleaved prM. Post-translationally, N-glycosylation plays a role in virulence in mammalian and mosquito hosts, but may have no effect on neurovirulence. Ubiquitination by host TRIM7 promotes virus attachment and fusion of the virus and the host endosome membrane. In terms of processing, N-glycosylated. The excreted form is glycosylated, which is required for efficient secretion of the protein from infected cells. Post-translationally, acetylated by host KAT5. Acetylation modulates NS3 RNA-binding and unwinding activities and plays an important positive role for viral replication. Phosphorylated on serines residues. This phosphorylation may trigger NS5 nuclear localization. In terms of processing, sumoylated, required for regulating IFN induced interferon stimulated genes/ISGs.

It is found in the virion. The protein resides in the host nucleus. The protein localises to the host cytoplasm. Its subcellular location is the host perinuclear region. It localises to the secreted. It is found in the virion membrane. The protein resides in the host endoplasmic reticulum membrane. It catalyses the reaction Selective hydrolysis of -Xaa-Xaa-|-Yaa- bonds in which each of the Xaa can be either Arg or Lys and Yaa can be either Ser or Ala.. The enzyme catalyses RNA(n) + a ribonucleoside 5'-triphosphate = RNA(n+1) + diphosphate. The catalysed reaction is a ribonucleoside 5'-triphosphate + H2O = a ribonucleoside 5'-diphosphate + phosphate + H(+). It carries out the reaction ATP + H2O = ADP + phosphate + H(+). It catalyses the reaction a 5'-end (5'-triphosphoguanosine)-ribonucleoside in mRNA + S-adenosyl-L-methionine = a 5'-end (N(7)-methyl 5'-triphosphoguanosine)-ribonucleoside in mRNA + S-adenosyl-L-homocysteine. The enzyme catalyses a 5'-end (N(7)-methyl 5'-triphosphoguanosine)-ribonucleoside in mRNA + S-adenosyl-L-methionine = a 5'-end (N(7)-methyl 5'-triphosphoguanosine)-(2'-O-methyl-ribonucleoside) in mRNA + S-adenosyl-L-homocysteine + H(+). Plays a role in virus budding by binding to the host cell membrane and packages the viral RNA into a nucleocapsid that forms the core of the mature virus particle. During virus entry, may induce genome penetration into the host cytoplasm after hemifusion induced by the surface proteins. Can migrate to the cell nucleus where it modulates host functions. Inhibits the integrated stress response (ISR) in the infected cell. Its function is as follows. Inhibits RNA silencing by interfering with host Dicer. In terms of biological role, prevents premature fusion activity of envelope proteins in trans-Golgi by binding to envelope protein E at pH 6.0. After virion release in extracellular space, gets dissociated from E dimers. Functionally, plays a role in host immune defense modulation and protection of envelope protein E during virion synthesis. PrM-E cleavage is inefficient, many virions are only partially matured and immature prM-E proteins could play a role in immune evasion. Contributes to fetal microcephaly in humans. Acts as a chaperone for envelope protein E during intracellular virion assembly by masking and inactivating envelope protein E fusion peptide. prM is the only viral peptide matured by host furin in the trans-Golgi network probably to avoid catastrophic activation of the viral fusion activity in acidic Golgi compartment prior to virion release. May play a role in virus budding. Exerts cytotoxic effects by activating a mitochondrial apoptotic pathway through M ectodomain. May display a viroporin activity. Its function is as follows. Binds to host cell surface receptors and mediates fusion between viral and cellular membranes. Efficient virus attachment to cell is, at least in part, mediated by host HAVCR1 in a cell-type specific manner. In addition, host NCAM1 can also be used as entry receptor. Interaction with host HSPA5 plays an important role in the early stages of infection as well. Envelope protein is synthesized in the endoplasmic reticulum and forms a heterodimer with protein prM. The heterodimer plays a role in virion budding in the ER, and the newly formed immature particle is covered with 60 spikes composed of heterodimers between precursor prM and envelope protein E. The virion is transported to the Golgi apparatus where the low pH causes the dissociation of PrM-E heterodimers and formation of E homodimers. PrM-E cleavage is inefficient, many virions are only partially matured and immature prM-E proteins could play a role in immune evasion. In terms of biological role, plays a role in the inhibition of host RLR-induced interferon-beta activation by targeting TANK-binding kinase 1/TBK1. In addition, recruits the host deubiquitinase USP8 to cleave 'Lys-11'-linked polyubiquitin chains from caspase-1/CASP1 thus inhibiting its proteasomal degradation. In turn, stabilized CASP1 promotes cleavage of cGAS, which inhibits its ability to recognize mitochondrial DNA release and initiate type I interferon signaling. Functionally, component of the viral RNA replication complex that recruits genomic RNA, the structural protein prM/E complex, and the NS2B/NS3 protease complex to the virion assembly site and orchestrates virus morphogenesis. Antagonizes also the host MDA5-mediated induction of alpha/beta interferon antiviral response. May disrupt adherens junction formation and thereby impair proliferation of radial cells in the host cortex. Required cofactor for the serine protease function of NS3. Its function is as follows. Displays three enzymatic activities: serine protease, NTPase and RNA helicase. NS3 serine protease, in association with NS2B, performs its autocleavage and cleaves the polyprotein at dibasic sites in the cytoplasm: C-prM, NS2A-NS2B, NS2B-NS3, NS3-NS4A, NS4A-2K and NS4B-NS5. NS3 RNA helicase binds RNA and unwinds dsRNA in the 3' to 5' direction. Leads to translation arrest when expressed ex vivo. Disrupts host centrosome organization in a CEP63-dependent manner to degrade host TBK1 and inhibits innate immune response. Inhibits the integrated stress response (ISR) in the infected cell. In terms of biological role, regulates the ATPase activity of the NS3 helicase activity. NS4A allows NS3 helicase to conserve energy during unwinding. Cooperatively with NS4B suppresses the Akt-mTOR pathway and leads to cellular dysregulation. By inhibiting host ANKLE2 functions, may cause defects in brain development, such as microcephaly. Also antagonizes the host MDA5-mediated induction of alpha/beta interferon antiviral response. Inhibits the integrated stress response (ISR) in the infected cell. Functionally, functions as a signal peptide for NS4B and is required for the interferon antagonism activity of the latter. Induces the formation of ER-derived membrane vesicles where the viral replication takes place. Also plays a role in the inhibition of host RLR-induced interferon-beta production at TANK-binding kinase 1/TBK1 level. Cooperatively with NS4A suppresses the Akt-mTOR pathway and leads to cellular dysregulation. Its function is as follows. Replicates the viral (+) and (-) RNA genome, and performs the capping of genomes in the cytoplasm. Methylates viral RNA cap at guanine N-7 and ribose 2'-O positions. Once sufficient NS5 is expressed, binds to the cap-proximal structure and inhibits further translation of the viral genome. Besides its role in RNA genome replication, also prevents the establishment of a cellular antiviral state by blocking the interferon-alpha/beta (IFN-alpha/beta) signaling pathway. Mechanistically, interferes with host kinases TBK1 and IKKE upstream of interferon regulatory factor 3/IRF3 to inhibit the RIG-I pathway. Also antagonizes type I interferon signaling by targeting STAT2 for degradation by the proteasome thereby preventing activation of JAK-STAT signaling pathway. Mechanistically, acts as a scaffold protein to connect host ZSWIM8/CUL3 ligase complex and STAT2, leading to STAT2 degradation. Within the host nucleus, disrupts host SUMO1 and STAT2 co-localization with PML, resulting in PML degradation. May also reduce immune responses by preventing the recruitment of the host PAF1 complex to interferon-responsive genes. The protein is Genome polyprotein of Aedes aegypti (Yellowfever mosquito).